Here is an 86-residue protein sequence, read N- to C-terminus: Small ribosomal subunit protein uS17 (86 aa).

Belongs to the universal ribosomal protein uS17 family. In terms of assembly, part of the 30S ribosomal subunit.

One of the primary rRNA binding proteins, it binds specifically to the 5'-end of 16S ribosomal RNA. This is Small ribosomal subunit protein uS17 from Nitrosococcus oceani (strain ATCC 19707 / BCRC 17464 / JCM 30415 / NCIMB 11848 / C-107).